We begin with the raw amino-acid sequence, 471 residues long: Microtubule-associated tyrosine carboxypeptidase 1 (471 aa).

Disordered stretches follow at residues 1 to 40 and 76 to 116; these read MVLD…PLYP and HMRR…LRPA. His280 lines the Zn(2+) pocket. Glu281 functions as the Nucleophile in the catalytic mechanism. Zn(2+) contacts are provided by His285 and Glu316.

The protein belongs to the peptidase MATCAP family. Zn(2+) is required as a cofactor.

Its subcellular location is the cytoplasm. It is found in the cytoskeleton. The enzyme catalyses C-terminal L-alpha-aminoacyl-L-glutamyl-L-glutamyl-L-tyrosyl-[tubulin] + H2O = C-terminal L-alpha-aminoacyl-L-glutamyl-L-glutamyl-[tubulin] + L-tyrosine. It carries out the reaction C-terminal L-alpha-aminoacyl-L-glutamyl-L-glutamyl-L-phenylalanyl-[tubulin] + H2O = C-terminal L-alpha-aminoacyl-L-glutamyl-L-glutamyl-[tubulin] + L-phenylalanine. Functionally, tyrosine carboxypeptidase that removes the C-terminal tyrosine residue of alpha-tubulin, thereby regulating microtubule dynamics and function. Also able to remove the C-terminal phenylalanine residue of alpha-tubulin TUBA8. Recognizes adjacent tubulin dimers along the same protofilament. This is Microtubule-associated tyrosine carboxypeptidase 1 from Homo sapiens (Human).